The chain runs to 358 residues: Uroporphyrinogen decarboxylase (358 aa).

Substrate-binding positions include 36–40 (RQAGR), Asp85, Tyr160, Ser215, and His338.

This sequence belongs to the uroporphyrinogen decarboxylase family. In terms of assembly, homodimer.

It localises to the cytoplasm. It catalyses the reaction uroporphyrinogen III + 4 H(+) = coproporphyrinogen III + 4 CO2. Its pathway is porphyrin-containing compound metabolism; protoporphyrin-IX biosynthesis; coproporphyrinogen-III from 5-aminolevulinate: step 4/4. Catalyzes the decarboxylation of four acetate groups of uroporphyrinogen-III to yield coproporphyrinogen-III. This chain is Uroporphyrinogen decarboxylase, found in Corynebacterium glutamicum (strain ATCC 13032 / DSM 20300 / JCM 1318 / BCRC 11384 / CCUG 27702 / LMG 3730 / NBRC 12168 / NCIMB 10025 / NRRL B-2784 / 534).